Consider the following 179-residue polypeptide: Large ribosomal subunit protein uL6 (179 aa).

Belongs to the universal ribosomal protein uL6 family. In terms of assembly, part of the 50S ribosomal subunit.

In terms of biological role, this protein binds to the 23S rRNA, and is important in its secondary structure. It is located near the subunit interface in the base of the L7/L12 stalk, and near the tRNA binding site of the peptidyltransferase center. This Chlorobium luteolum (strain DSM 273 / BCRC 81028 / 2530) (Pelodictyon luteolum) protein is Large ribosomal subunit protein uL6.